Consider the following 516-residue polypeptide: Bifunctional purine biosynthesis protein PurH (516 aa).

Residues 1–149 form the MGS-like domain; sequence MSERQPIRRA…KNHANVAVLT (149 aa).

It belongs to the PurH family.

It carries out the reaction (6R)-10-formyltetrahydrofolate + 5-amino-1-(5-phospho-beta-D-ribosyl)imidazole-4-carboxamide = 5-formamido-1-(5-phospho-D-ribosyl)imidazole-4-carboxamide + (6S)-5,6,7,8-tetrahydrofolate. The enzyme catalyses IMP + H2O = 5-formamido-1-(5-phospho-D-ribosyl)imidazole-4-carboxamide. Its pathway is purine metabolism; IMP biosynthesis via de novo pathway; 5-formamido-1-(5-phospho-D-ribosyl)imidazole-4-carboxamide from 5-amino-1-(5-phospho-D-ribosyl)imidazole-4-carboxamide (10-formyl THF route): step 1/1. It functions in the pathway purine metabolism; IMP biosynthesis via de novo pathway; IMP from 5-formamido-1-(5-phospho-D-ribosyl)imidazole-4-carboxamide: step 1/1. This is Bifunctional purine biosynthesis protein PurH from Cutibacterium acnes (strain DSM 16379 / KPA171202) (Propionibacterium acnes).